The chain runs to 399 residues: Elongation factor Tu (399 aa).

A tr-type G domain is found at 10–204 (KPHVNIGTIG…AVDEAIPEPE (195 aa)). The interval 19 to 26 (GHVDHGKT) is G1. 19–26 (GHVDHGKT) is a GTP binding site. Residue threonine 26 coordinates Mg(2+). Residues 60–64 (GITIN) are G2. The interval 81–84 (DCPG) is G3. GTP contacts are provided by residues 81–85 (DCPGH) and 136–139 (NKCD). The segment at 136 to 139 (NKCD) is G4. A G5 region spans residues 174-176 (SGL).

Belongs to the TRAFAC class translation factor GTPase superfamily. Classic translation factor GTPase family. EF-Tu/EF-1A subfamily. As to quaternary structure, monomer.

Its subcellular location is the cytoplasm. The enzyme catalyses GTP + H2O = GDP + phosphate + H(+). In terms of biological role, GTP hydrolase that promotes the GTP-dependent binding of aminoacyl-tRNA to the A-site of ribosomes during protein biosynthesis. In Parasynechococcus marenigrum (strain WH8102), this protein is Elongation factor Tu.